Reading from the N-terminus, the 500-residue chain is TBC1 domain family member 10A (500 aa).

Positions 1-10 are enriched in basic and acidic residues; the sequence is MAKSSRENGP. Positions 1–45 are disordered; sequence MAKSSRENGPREPAAGGSLSGTRESLAQGPDAATADELSSLGSDS. Phosphoserine is present on residues S39, S40, and S45. The Rab-GAP TBC domain maps to 111-299; it reads GIPPSLRGRA…RVWDMFFCEG (189 aa). Disordered stretches follow at residues 396–415 and 420–500; these read AEPG…LPPD and SSKA…DTYL. The residue at position 407 (S407) is a Phosphoserine. The segment covering 438–453 has biased composition (polar residues); that stretch reads TSAQLDKSPGLSQATV. Residue T477 is modified to Phosphothreonine. The tract at residues 497–500 is binding to the PDZ domain of EBP50; it reads DTYL.

Binds to the first PDZ domain of NHERF1 and NHERF2. In terms of tissue distribution, expressed in most tissues, except for skeletal muscle.

The protein resides in the cell projection. It localises to the microvillus. Functionally, GTPase-activating protein (GAP) specific for RAB27A and RAB35. Does not show GAP activity for RAB2A, RAB3A and RAB4A. The polypeptide is TBC1 domain family member 10A (Tbc1d10a) (Mus musculus (Mouse)).